We begin with the raw amino-acid sequence, 30 residues long: Dendrotoxin A (30 aa).

A disulfide bridge links Cys3 with Cys22.

Belongs to the three-finger toxin family. Short-chain subfamily. Acn-esterase inhibitor sub-subfamily. In terms of processing, contains 4 disulfide bonds. As to expression, expressed by the venom gland.

Its subcellular location is the secreted. Functionally, inhibits acetylcholinesterase. Has been described to inhibit both the slowly and the rapidly inactivating phases of potassium efflux. This Dendroaspis angusticeps (Eastern green mamba) protein is Dendrotoxin A.